The primary structure comprises 884 residues: Lon protease homolog 2, peroxisomal (884 aa).

Residues Leu12–Leu255 enclose the Lon N-terminal domain. The segment at Ser67–Lys101 is disordered. The span at Ser75–Ala89 shows a compositional bias: gly residues. Residue Gly408–Thr415 coordinates ATP. Residues Val689–Gly874 enclose the Lon proteolytic domain. Active-site residues include Ser780 and Lys823. Positions Ser882–Leu884 match the Microbody targeting signal motif.

This sequence belongs to the peptidase S16 family. As to expression, expressed in roots, leaves and panicles.

Its subcellular location is the peroxisome matrix. It catalyses the reaction Hydrolysis of proteins in presence of ATP.. ATP-dependent serine protease that mediates the selective degradation of misfolded and unassembled polypeptides in the peroxisomal matrix. Necessary for type 2 peroxisome targeting signal (PTS2)-containing protein processing and facilitates peroxisome matrix protein import. This chain is Lon protease homolog 2, peroxisomal (LON1), found in Oryza sativa subsp. indica (Rice).